The primary structure comprises 310 residues: Thioesterase pytI (310 aa).

2 consecutive transmembrane segments (helical) span residues 14–34 and 95–115; these read SLTPLILIHAISGLALPYFAL and LLGGWSMGGMLAIEMAAIFVA. A disordered region spans residues 168-195; it reads TLSDDASTTTSSDNSRASTDHGADSEVE. The span at 170 to 184 shows a compositional bias: low complexity; sequence SDDASTTTSSDNSRA.

The protein belongs to the AMT4 thioesterase family.

The protein resides in the membrane. It participates in secondary metabolite biosynthesis. Functionally, thioesterase; part of the gene cluster that mediates the biosynthesis of pyranterreones, a family of antioxidative compounds. The first step of pyranonigrins biosynthesis is performed by the hybrid PKS-NRPS synthetase pytA that condenses 4 malonyl-CoA units ato the acetyl starter unit by the modular PKS of pytA. The acyl chain is then connected to an L-serine through the amide bond by the modular NRPS of pytA. A tetramic acid is formed and released from the PKS-NRPS pytA to give pyranterreone 5 with the help of the thioesterase pytI. Pyranterreone 5 could be methylated by pytC to afford pyranterreone 6. Both pyranterreones 5 and 6 are subsequently oxidized by the FAD-linked oxidoreductase pytB and the cytochrome P450 monooxygenase pytD to form the fused gamma-pyrone core, resulting in pyranterreones 7 and 11, respectively. The hydroxy group at C-8 of pyranterreones 7 and 11 are dehydrated by the aspartyl protease pytH to form a delta-7 double bond to give pyranterreones 3 and 1, 2 accordingly. The exo-methylene of pyranterreone 3 could be reduced into a pendant methyl by reductase pytE to provide pyranterreone 4, also known as cordylactam. Pyranterreone 4 can be reconverted to pyranterreone 3 through pytB-catalyzed dehydrogenation or further oxidized to pyranterreones 9 and 10. This Aspergillus terreus protein is Thioesterase pytI.